We begin with the raw amino-acid sequence, 453 residues long: tRNA modification GTPase MnmE (453 aa).

The (6S)-5-formyl-5,6,7,8-tetrahydrofolate site is built by R22, E79, and K119. One can recognise a TrmE-type G domain in the interval 215-376 (GMKVVIAGRP…LKQHLKSLMG (162 aa)). N225 lines the K(+) pocket. GTP-binding positions include 225-230 (NAGKSS), 244-250 (TEIAGTT), 269-272 (DTAG), and 334-337 (NKAD). Residue S229 participates in Mg(2+) binding. K(+) is bound by residues T244, I246, and T249. T250 is a binding site for Mg(2+). K453 contacts (6S)-5-formyl-5,6,7,8-tetrahydrofolate.

This sequence belongs to the TRAFAC class TrmE-Era-EngA-EngB-Septin-like GTPase superfamily. TrmE GTPase family. As to quaternary structure, homodimer. Heterotetramer of two MnmE and two MnmG subunits. K(+) is required as a cofactor.

The protein resides in the cytoplasm. Its function is as follows. Exhibits a very high intrinsic GTPase hydrolysis rate. Involved in the addition of a carboxymethylaminomethyl (cmnm) group at the wobble position (U34) of certain tRNAs, forming tRNA-cmnm(5)s(2)U34. This chain is tRNA modification GTPase MnmE, found in Shewanella sp. (strain MR-7).